A 779-amino-acid chain; its full sequence is Polyribonucleotide nucleotidyltransferase (779 aa).

Aspartate 490 and aspartate 496 together coordinate Mg(2+). Positions 557 to 618 (PHILSLKINP…EAVKARIEAV (62 aa)) constitute a KH domain. The S1 motif domain occupies 625–693 (GEEFEGTVVK…DRGKIDLIRP (69 aa)). The segment covering 699 to 752 (VPLREPRAPRGGDRGPRRDSDRGGDRGPRREFSDRGPRPEGARSERPEGQRTER) has biased composition (basic and acidic residues). Positions 699 to 779 (VPLREPRAPR…AAPVFPRRED (81 aa)) are disordered. The span at 757–767 (PATQESSQSSD) shows a compositional bias: polar residues.

This sequence belongs to the polyribonucleotide nucleotidyltransferase family. Requires Mg(2+) as cofactor.

The protein localises to the cytoplasm. The catalysed reaction is RNA(n+1) + phosphate = RNA(n) + a ribonucleoside 5'-diphosphate. In terms of biological role, involved in mRNA degradation. Catalyzes the phosphorolysis of single-stranded polyribonucleotides processively in the 3'- to 5'-direction. In Deinococcus radiodurans (strain ATCC 13939 / DSM 20539 / JCM 16871 / CCUG 27074 / LMG 4051 / NBRC 15346 / NCIMB 9279 / VKM B-1422 / R1), this protein is Polyribonucleotide nucleotidyltransferase.